A 398-amino-acid polypeptide reads, in one-letter code: Fructose-bisphosphate aldolase 2, chloroplastic (398 aa).

A chloroplast-targeting transit peptide spans 1 to 46 (MASTSLLKASPVLDKSEWVKGQSVLFRQPSSASVVLRNRATSLTVR). Arg95 serves as a coordination point for substrate. Ser157 carries the phosphoserine modification. Lys185 contacts substrate. Ser215 is modified (phosphoserine). The active-site Proton acceptor is the Glu225. The active-site Schiff-base intermediate with dihydroxyacetone-P is the Lys267. Position 309–311 (309–311 (SGG)) interacts with substrate. Position 394 is an N6,N6,N6-trimethyllysine (Lys394).

It belongs to the class I fructose-bisphosphate aldolase family. In terms of assembly, homotetramer. Post-translationally, can be trimethylated at Lys-394 by LSMT-L. The methylation level has no influence on the ologomerization state or on the kinetic properties of the enzyme. In terms of processing, phosphorylated on tyrosine residues in response to abscisic acid (ABA) in germinating seeds. Highly expressed in rosettes leaves.

Its subcellular location is the plastid. It localises to the chloroplast. The protein resides in the plastoglobule. The protein localises to the chloroplast stroma. The enzyme catalyses beta-D-fructose 1,6-bisphosphate = D-glyceraldehyde 3-phosphate + dihydroxyacetone phosphate. The protein operates within carbohydrate degradation; glycolysis; D-glyceraldehyde 3-phosphate and glycerone phosphate from D-glucose: step 4/4. Plays a key role in glycolysis and gluconeogenesis. The sequence is that of Fructose-bisphosphate aldolase 2, chloroplastic from Arabidopsis thaliana (Mouse-ear cress).